Here is a 158-residue protein sequence, read N- to C-terminus: Phosphopantetheine adenylyltransferase (158 aa).

S9 serves as a coordination point for substrate. ATP contacts are provided by residues 9-10 and H17; that span reads SF. Positions 41, 73, and 87 each coordinate substrate. Residues 88–90, E98, and 122–128 contribute to the ATP site; these read GLR and YSFVSSS.

This sequence belongs to the bacterial CoaD family. As to quaternary structure, homohexamer. Mg(2+) is required as a cofactor.

It localises to the cytoplasm. It catalyses the reaction (R)-4'-phosphopantetheine + ATP + H(+) = 3'-dephospho-CoA + diphosphate. The protein operates within cofactor biosynthesis; coenzyme A biosynthesis; CoA from (R)-pantothenate: step 4/5. In terms of biological role, reversibly transfers an adenylyl group from ATP to 4'-phosphopantetheine, yielding dephospho-CoA (dPCoA) and pyrophosphate. This is Phosphopantetheine adenylyltransferase from Mycolicibacterium smegmatis (strain ATCC 700084 / mc(2)155) (Mycobacterium smegmatis).